We begin with the raw amino-acid sequence, 460 residues long: Argininosuccinate lyase (460 aa).

The protein belongs to the lyase 1 family. Argininosuccinate lyase subfamily.

The protein localises to the cytoplasm. It carries out the reaction 2-(N(omega)-L-arginino)succinate = fumarate + L-arginine. Its pathway is amino-acid biosynthesis; L-arginine biosynthesis; L-arginine from L-ornithine and carbamoyl phosphate: step 3/3. The polypeptide is Argininosuccinate lyase (Edwardsiella ictaluri (strain 93-146)).